We begin with the raw amino-acid sequence, 352 residues long: Protein RecA (352 aa).

ATP is bound at residue 74 to 81 (GPESSGKT).

The protein belongs to the RecA family.

It is found in the cytoplasm. Functionally, can catalyze the hydrolysis of ATP in the presence of single-stranded DNA, the ATP-dependent uptake of single-stranded DNA by duplex DNA, and the ATP-dependent hybridization of homologous single-stranded DNAs. It interacts with LexA causing its activation and leading to its autocatalytic cleavage. In Ralstonia nicotianae (strain ATCC BAA-1114 / GMI1000) (Ralstonia solanacearum), this protein is Protein RecA.